We begin with the raw amino-acid sequence, 390 residues long: GTPase Obg (390 aa).

The 159-residue stretch at M1 to L159 folds into the Obg domain. An OBG-type G domain is found at A160–I333. Residues G166–S173, F191–V195, D213–G216, N283–D286, and S314–A316 contribute to the GTP site. Residues S173 and T193 each coordinate Mg(2+). The interval E363 to E382 is disordered. Residues F366–E382 are compositionally biased toward acidic residues.

The protein belongs to the TRAFAC class OBG-HflX-like GTPase superfamily. OBG GTPase family. In terms of assembly, monomer. The cofactor is Mg(2+).

The protein localises to the cytoplasm. In terms of biological role, an essential GTPase which binds GTP, GDP and possibly (p)ppGpp with moderate affinity, with high nucleotide exchange rates and a fairly low GTP hydrolysis rate. Plays a role in control of the cell cycle, stress response, ribosome biogenesis and in those bacteria that undergo differentiation, in morphogenesis control. The sequence is that of GTPase Obg from Haemophilus influenzae (strain ATCC 51907 / DSM 11121 / KW20 / Rd).